A 280-amino-acid polypeptide reads, in one-letter code: ESX-1 secretion-associated protein EspJ (280 aa).

Residue Ser70 is modified to Phosphoserine. 2 stretches are compositionally biased toward low complexity: residues 167–181 (QTIS…QSAQ) and 246–280 (PAQA…TTTL). Residues 167–280 (QTISQTAQQA…TPAPSTTTTL (114 aa)) are disordered.

Phosphorylated at Ser-70.

Its subcellular location is the secreted. In terms of biological role, could be involved in regulation of growth and intracellular survival. This is ESX-1 secretion-associated protein EspJ from Mycobacterium tuberculosis (strain CDC 1551 / Oshkosh).